A 425-amino-acid polypeptide reads, in one-letter code: Putative type I restriction enzyme MjaX specificity subunit (425 aa).

Belongs to the type-I restriction system S methylase family.

Functionally, a putative specificity (S) subunit of a type I restriction enzyme thought to recognize 5'-TAGN(6)TGC-3'; the other subunits are unknown. The polypeptide is Putative type I restriction enzyme MjaX specificity subunit (Methanocaldococcus jannaschii (strain ATCC 43067 / DSM 2661 / JAL-1 / JCM 10045 / NBRC 100440) (Methanococcus jannaschii)).